Reading from the N-terminus, the 1317-residue chain is ABC transporter C family member 14 (1317 aa).

An ABC transmembrane type-1 1 domain is found at 119–404 (NKYALISNIF…LPEDIYKAIG (286 aa)). The next 5 helical transmembrane spans lie at 127-147 (IFIT…INYI), 156-176 (SILK…GQSI), 249-269 (ILIL…VGFG), 341-361 (VLFW…VLVS), and 375-395 (LDVT…LIYL). The segment at 426–451 (ENNQNINFNNNNNNNNNNKNNNNNDD) is disordered. Residues 427–449 (NNQNINFNNNNNNNNNNKNNNNN) are compositionally biased toward low complexity. The ABC transporter 1 domain occupies 490–710 (ENEENIKINE…ISDKNDPNLI (221 aa)). 522-529 (GVVGSGKT) contacts ATP. 5 consecutive transmembrane segments (helical) span residues 734 to 754 (YFSY…FFIG), 778 to 798 (DSFY…LLMI), 871 to 891 (LISI…LFII), 969 to 989 (LEVM…LFTS), and 992 to 1012 (GLAA…SWGV). Residues 744–1027 (LFITISLFFI…LEVKMNSFQR (284 aa)) enclose the ABC transmembrane type-1 2 domain. One can recognise an ABC transporter 2 domain in the interval 1071–1306 (IEFKNVEIKY…PNSKFNKLIK (236 aa)). Residue 1105 to 1112 (GRTGAGKT) coordinates ATP.

Belongs to the ABC transporter superfamily. ABCC family. Conjugate transporter (TC 3.A.1.208) subfamily.

The protein resides in the membrane. This is ABC transporter C family member 14 (abcC14) from Dictyostelium discoideum (Social amoeba).